The following is a 210-amino-acid chain: Cell division protein SepF (210 aa).

Low complexity-rich tracts occupy residues 36-47 and 59-69; these read QQQQTPAAVPTQ and RASATTATTAS. Disordered regions lie at residues 36–69 and 182–210; these read QQQQ…TTAS and NEMS…QMIQ.

It belongs to the SepF family. As to quaternary structure, homodimer. Interacts with FtsZ.

It is found in the cytoplasm. Its function is as follows. Cell division protein that is part of the divisome complex and is recruited early to the Z-ring. Probably stimulates Z-ring formation, perhaps through the cross-linking of FtsZ protofilaments. Its function overlaps with FtsA. This chain is Cell division protein SepF, found in Trichodesmium erythraeum (strain IMS101).